Here is a 488-residue protein sequence, read N- to C-terminus: MSQSVESRTRIKSERYESGVIPYAKMGYWDADYVIKETDILALFRITPQPGVDPIEASAAIAGESSTATWTVVWTDLLTACDLYRAKAYRVDPVPNVADQYFAYIAYDIDLFEEGSIANLTASIIGNVFGFKAVKALRLEDMRMPVAYLKTFQGPATGLIVERERMDKFGRPFLGATVKPKLGLSGKNYGRVVYEGLKGGLDFLKDDENINSQPFMRWRERFLYSMEGVNKASASAGEIKGHYLNVTAATMEDMYERAEFSKEVGSIICMIDLVIGYTAIQSMAIWARKHDMILHLHRAGNSTYSRQKNHGMNFRVICKWMRMAGVDHIHAGTVVGKLEGDPLMIKGFYNTLLESETDINLPQGLFFAQNWASLRKVVPVASGGIHAGQMHQLLDYLGDDVVLQFGGGTIGHPDGIQAGATANKVALESMVMARNEGRNYVAKGPQILRDAAKTCGPLQTALDLWKDISFNYTSTDTADFVETPTANI.

Asn127 and Thr177 together coordinate substrate. Lys179 functions as the Proton acceptor in the catalytic mechanism. Position 181 (Lys181) interacts with substrate. Mg(2+) contacts are provided by Lys205, Asp207, and Glu208. Lys205 is subject to N6-carboxylysine. His297 serves as the catalytic Proton acceptor. Residues Arg298, His330, and Ser382 each coordinate substrate.

This sequence belongs to the RuBisCO large chain family. Type I subfamily. Heterohexadecamer of 8 large chains and 8 small chains. Requires Mg(2+) as cofactor.

It is found in the plastid. The protein localises to the chloroplast. The catalysed reaction is 2 (2R)-3-phosphoglycerate + 2 H(+) = D-ribulose 1,5-bisphosphate + CO2 + H2O. It catalyses the reaction D-ribulose 1,5-bisphosphate + O2 = 2-phosphoglycolate + (2R)-3-phosphoglycerate + 2 H(+). In terms of biological role, ruBisCO catalyzes two reactions: the carboxylation of D-ribulose 1,5-bisphosphate, the primary event in carbon dioxide fixation, as well as the oxidative fragmentation of the pentose substrate in the photorespiration process. Both reactions occur simultaneously and in competition at the same active site. The chain is Ribulose bisphosphate carboxylase large chain from Pyropia suborbiculata (Red alga).